A 63-amino-acid polypeptide reads, in one-letter code: Muscarinic toxin 2 (63 aa).

Disulfide bonds link Cys-3–Cys-22, Cys-17–Cys-42, Cys-44–Cys-55, and Cys-56–Cys-61.

It belongs to the three-finger toxin family. Short-chain subfamily. Type B muscarinic toxin sub-subfamily. As to quaternary structure, monomer. Expressed by the venom gland.

It is found in the secreted. In terms of biological role, blocks M2 muscarinic acetylcholine receptors (CHRM2). Fully blocks the binding of N-methylscopolamine (NMS) and oxotremorine-M to M2 receptors, slightly increased NMS binding to M1 receptors. The sequence is that of Muscarinic toxin 2 from Dendroaspis angusticeps (Eastern green mamba).